The sequence spans 331 residues: Glutaminase (331 aa).

Serine 77, asparagine 129, glutamate 173, asparagine 180, tyrosine 204, tyrosine 256, and valine 274 together coordinate substrate.

This sequence belongs to the glutaminase family. Homotetramer.

It carries out the reaction L-glutamine + H2O = L-glutamate + NH4(+). This Oceanobacillus iheyensis (strain DSM 14371 / CIP 107618 / JCM 11309 / KCTC 3954 / HTE831) protein is Glutaminase.